Here is a 351-residue protein sequence, read N- to C-terminus: Uroporphyrinogen decarboxylase (351 aa).

Residues R26–R30, D76, Y153, S208, and H323 contribute to the substrate site.

The protein belongs to the uroporphyrinogen decarboxylase family. Homodimer.

The protein localises to the cytoplasm. It catalyses the reaction uroporphyrinogen III + 4 H(+) = coproporphyrinogen III + 4 CO2. The protein operates within porphyrin-containing compound metabolism; protoporphyrin-IX biosynthesis; coproporphyrinogen-III from 5-aminolevulinate: step 4/4. Catalyzes the decarboxylation of four acetate groups of uroporphyrinogen-III to yield coproporphyrinogen-III. In Prochlorococcus marinus (strain MIT 9211), this protein is Uroporphyrinogen decarboxylase.